Consider the following 122-residue polypeptide: Large ribosomal subunit protein uL22 (122 aa).

Belongs to the universal ribosomal protein uL22 family. Part of the 50S ribosomal subunit.

In terms of biological role, this protein binds specifically to 23S rRNA; its binding is stimulated by other ribosomal proteins, e.g. L4, L17, and L20. It is important during the early stages of 50S assembly. It makes multiple contacts with different domains of the 23S rRNA in the assembled 50S subunit and ribosome. Functionally, the globular domain of the protein is located near the polypeptide exit tunnel on the outside of the subunit, while an extended beta-hairpin is found that lines the wall of the exit tunnel in the center of the 70S ribosome. The chain is Large ribosomal subunit protein uL22 from Thermosynechococcus vestitus (strain NIES-2133 / IAM M-273 / BP-1).